The sequence spans 191 residues: Large ribosomal subunit protein uL6 (191 aa).

It belongs to the universal ribosomal protein uL6 family. Part of the 50S ribosomal subunit.

In terms of biological role, this protein binds to the 23S rRNA, and is important in its secondary structure. It is located near the subunit interface in the base of the L7/L12 stalk, and near the tRNA binding site of the peptidyltransferase center. The polypeptide is Large ribosomal subunit protein uL6 (Gloeobacter violaceus (strain ATCC 29082 / PCC 7421)).